Consider the following 357-residue polypeptide: UDP-N-acetylglucosamine--N-acetylmuramyl-(pentapeptide) pyrophosphoryl-undecaprenol N-acetylglucosamine transferase (357 aa).

UDP-N-acetyl-alpha-D-glucosamine-binding positions include 13–15 (TGG), Asn-125, Arg-161, Ser-189, Ile-243, and Gln-288.

This sequence belongs to the glycosyltransferase 28 family. MurG subfamily.

The protein resides in the cell inner membrane. The catalysed reaction is di-trans,octa-cis-undecaprenyl diphospho-N-acetyl-alpha-D-muramoyl-L-alanyl-D-glutamyl-meso-2,6-diaminopimeloyl-D-alanyl-D-alanine + UDP-N-acetyl-alpha-D-glucosamine = di-trans,octa-cis-undecaprenyl diphospho-[N-acetyl-alpha-D-glucosaminyl-(1-&gt;4)]-N-acetyl-alpha-D-muramoyl-L-alanyl-D-glutamyl-meso-2,6-diaminopimeloyl-D-alanyl-D-alanine + UDP + H(+). It functions in the pathway cell wall biogenesis; peptidoglycan biosynthesis. Functionally, cell wall formation. Catalyzes the transfer of a GlcNAc subunit on undecaprenyl-pyrophosphoryl-MurNAc-pentapeptide (lipid intermediate I) to form undecaprenyl-pyrophosphoryl-MurNAc-(pentapeptide)GlcNAc (lipid intermediate II). The chain is UDP-N-acetylglucosamine--N-acetylmuramyl-(pentapeptide) pyrophosphoryl-undecaprenol N-acetylglucosamine transferase from Bordetella pertussis (strain Tohama I / ATCC BAA-589 / NCTC 13251).